Here is a 281-residue protein sequence, read N- to C-terminus: UPF0162 protein PD_0709 (281 aa).

TPR repeat units follow at residues 193-226 (VRIL…VPNQ) and 227-260 (PEAL…YPST).

The protein belongs to the UPF0162 family.

The polypeptide is UPF0162 protein PD_0709 (Xylella fastidiosa (strain Temecula1 / ATCC 700964)).